A 117-amino-acid chain; its full sequence is Large ribosomal subunit protein bL20 (117 aa).

It belongs to the bacterial ribosomal protein bL20 family.

Binds directly to 23S ribosomal RNA and is necessary for the in vitro assembly process of the 50S ribosomal subunit. It is not involved in the protein synthesizing functions of that subunit. The polypeptide is Large ribosomal subunit protein bL20 (Campylobacter lari (strain RM2100 / D67 / ATCC BAA-1060)).